The chain runs to 523 residues: GMP synthase [glutamine-hydrolyzing] (523 aa).

A Glutamine amidotransferase type-1 domain is found at 8-205 (KILILDFGSQ…VVGICGCECK (198 aa)). The Nucleophile role is filled by Cys-85. Catalysis depends on residues His-179 and Glu-181. The 193-residue stretch at 206–398 (WTAENIIEDA…LGLPAEMLNR (193 aa)) folds into the GMPS ATP-PPase domain. 233-239 (SGGVDSS) is an ATP binding site.

Homodimer.

It catalyses the reaction XMP + L-glutamine + ATP + H2O = GMP + L-glutamate + AMP + diphosphate + 2 H(+). The protein operates within purine metabolism; GMP biosynthesis; GMP from XMP (L-Gln route): step 1/1. In terms of biological role, catalyzes the synthesis of GMP from XMP. The sequence is that of GMP synthase [glutamine-hydrolyzing] from Actinobacillus pleuropneumoniae serotype 3 (strain JL03).